The following is a 319-amino-acid chain: Myoblast determination protein 1 (319 aa).

Met1 participates in a covalent cross-link: Peptide (Met-Gly) (interchain with G-Cter in ubiquitin). Lys104 is modified (N6-methyllysine; by EHMT2). The region spanning 109–160 (DRRKAATMRERRRLSKVNEAFETLKRCTSSNPNQRLPKVEILRNAIRYIEGL) is the bHLH domain. Disordered stretches follow at residues 174 to 222 (AAAA…GARR) and 267 to 319 (PALL…YQVL). A compositionally biased stretch (polar residues) spans 197–207 (SDASSPRSNCS). Residues 267–276 (PALLLADAPP) show a composition bias toward low complexity.

In terms of assembly, efficient DNA binding requires dimerization with another bHLH protein. Seems to form active heterodimers with ITF-2. Interacts with SUV39H1. Interacts with DDX5. Interacts with CHD2. Interacts with TSC22D3. Interacts with SETD3. Interacts with P-TEFB complex; promotes the transcriptional activity of MYOD1 through its CDK9-mediated phosphorylation. Interacts with CSRP3. Interacts with NUPR1. Post-translationally, phosphorylated by CDK9. This phosphorylation promotes its function in muscle differentiation. In terms of processing, acetylated by a complex containing EP300 and PCAF. The acetylation is essential to activate target genes. Conversely, its deacetylation by SIRT1 inhibits its function. Ubiquitinated on the N-terminus; which is required for proteasomal degradation. Post-translationally, methylation at Lys-104 by EHMT2/G9a inhibits myogenic activity.

Its subcellular location is the nucleus. Functionally, acts as a transcriptional activator that promotes transcription of muscle-specific target genes and plays a role in muscle differentiation. Together with MYF5 and MYOG, co-occupies muscle-specific gene promoter core region during myogenesis. Induces fibroblasts to differentiate into myoblasts. Interacts with and is inhibited by the twist protein. This interaction probably involves the basic domains of both proteins. The sequence is that of Myoblast determination protein 1 (MYOD1) from Ovis aries (Sheep).